The chain runs to 337 residues: UDP-glucose 4-epimerase (337 aa).

Residues Tyr11–Ile12, Asp31–Ala36, Asp58–Leu59, Phe80–Lys84, Asn99, Ser124, Tyr149, Lys153, and Phe178 each bind NAD(+). Substrate contacts are provided by Ser124 and Tyr149. Catalysis depends on Tyr149, which acts as the Proton acceptor. Residues Asn179, Asn199 to Leu200, Gly216 to Phe218, Arg231, and Arg292 to Asp295 each bind substrate.

This sequence belongs to the NAD(P)-dependent epimerase/dehydratase family. As to quaternary structure, homodimer. The cofactor is NAD(+).

It carries out the reaction UDP-alpha-D-glucose = UDP-alpha-D-galactose. It participates in carbohydrate metabolism; galactose metabolism. Functionally, involved in the metabolism of galactose. Catalyzes the conversion of UDP-galactose (UDP-Gal) to UDP-glucose (UDP-Glc) through a mechanism involving the transient reduction of NAD. The protein is UDP-glucose 4-epimerase (galE) of Erwinia amylovora (Fire blight bacteria).